Here is a 391-residue protein sequence, read N- to C-terminus: DNA repair protein NreB (391 aa).

Residues 3–17 form a C4-type zinc finger; the sequence is CIECRGRMLCSRKVC. The PIP motif motif lies at 384–391; sequence QRTLWEFM.

This sequence belongs to the Nre family. In terms of assembly, interacts with the DNA polymerase sliding clamp (PCNA) via the PIP (PCNA-interacting peptide) motif.

In terms of biological role, involved in DNA damage repair. The sequence is that of DNA repair protein NreB from Archaeoglobus fulgidus (strain ATCC 49558 / DSM 4304 / JCM 9628 / NBRC 100126 / VC-16).